Here is a 213-residue protein sequence, read N- to C-terminus: Protein ras-1 (213 aa).

15–22 (GGGGVGKS) lines the GTP pocket. The Effector region motif lies at 37–45 (YDPTIEDSY). GTP is bound by residues 62–66 (DTAGQ) and 121–124 (NKYD). At cysteine 210 the chain carries Cysteine methyl ester. Cysteine 210 is lipidated: S-farnesyl cysteine. A propeptide spans 211–213 (IMM) (removed in mature form).

The protein belongs to the small GTPase superfamily. Ras family.

It is found in the cell membrane. The catalysed reaction is GTP + H2O = GDP + phosphate + H(+). Its function is as follows. Ras proteins bind GDP/GTP and possess intrinsic GTPase activity. This Neurospora crassa (strain ATCC 24698 / 74-OR23-1A / CBS 708.71 / DSM 1257 / FGSC 987) protein is Protein ras-1 (ras-1).